The sequence spans 440 residues: 23S rRNA (uracil(1939)-C(5))-methyltransferase RlmD (440 aa).

Positions 10–68 (KALPTQAVEITIDNLDHHLTGVGRYQGKACFVEGVLPGEKVSVQITEQKKQYAHARLRQ) constitute a TRAM domain. Residues Cys81, Cys87, Cys90, and Cys169 each coordinate [4Fe-4S] cluster. S-adenosyl-L-methionine contacts are provided by Gln272, Phe301, Asn306, Glu322, Asp349, and Asp372. Residue Cys398 is the Nucleophile of the active site.

It belongs to the class I-like SAM-binding methyltransferase superfamily. RNA M5U methyltransferase family. RlmD subfamily.

The catalysed reaction is uridine(1939) in 23S rRNA + S-adenosyl-L-methionine = 5-methyluridine(1939) in 23S rRNA + S-adenosyl-L-homocysteine + H(+). Functionally, catalyzes the formation of 5-methyl-uridine at position 1939 (m5U1939) in 23S rRNA. This chain is 23S rRNA (uracil(1939)-C(5))-methyltransferase RlmD, found in Tolumonas auensis (strain DSM 9187 / NBRC 110442 / TA 4).